The sequence spans 447 residues: UPF0210 protein LBUL_0934 (447 aa).

Belongs to the UPF0210 family. In terms of assembly, homodimer.

The protein is UPF0210 protein LBUL_0934 of Lactobacillus delbrueckii subsp. bulgaricus (strain ATCC BAA-365 / Lb-18).